We begin with the raw amino-acid sequence, 35 residues long: Photosystem II reaction center protein M (35 aa).

Residues 5–25 form a helical membrane-spanning segment; sequence ILAFIATALFILVPTAFLLII.

This sequence belongs to the PsbM family. As to quaternary structure, PSII is composed of 1 copy each of membrane proteins PsbA, PsbB, PsbC, PsbD, PsbE, PsbF, PsbH, PsbI, PsbJ, PsbK, PsbL, PsbM, PsbT, PsbX, PsbY, PsbZ, Psb30/Ycf12, at least 3 peripheral proteins of the oxygen-evolving complex and a large number of cofactors. It forms dimeric complexes.

It localises to the plastid. The protein resides in the chloroplast thylakoid membrane. Functionally, one of the components of the core complex of photosystem II (PSII). PSII is a light-driven water:plastoquinone oxidoreductase that uses light energy to abstract electrons from H(2)O, generating O(2) and a proton gradient subsequently used for ATP formation. It consists of a core antenna complex that captures photons, and an electron transfer chain that converts photonic excitation into a charge separation. This subunit is found at the monomer-monomer interface. This is Photosystem II reaction center protein M from Amborella trichopoda.